Consider the following 285-residue polypeptide: 4-hydroxybenzoate octaprenyltransferase (285 aa).

Helical transmembrane passes span 28-48 (LWALWMAAGGPPALSVFCIFF), 86-106 (IAAWEAVLIAAVLALIAFALI), 110-130 (NSLTKWLAVVAAVVAGTYPFF), 133-153 (FFAIPQAYLGIAFGFGIPMAF), 160-180 (VPLVAWVMLLANVFWAVAYDT), 207-227 (VAAIMLCYAAFLVLMGWAGVM), 232-252 (WPYWVGLAAAAVCAGYHYTLI), and 262-284 (AAFRHNNWLGACVFAGTAVAYAI).

Belongs to the UbiA prenyltransferase family. Mg(2+) serves as cofactor.

It is found in the cell inner membrane. The catalysed reaction is all-trans-octaprenyl diphosphate + 4-hydroxybenzoate = 4-hydroxy-3-(all-trans-octaprenyl)benzoate + diphosphate. It functions in the pathway cofactor biosynthesis; ubiquinone biosynthesis. Functionally, catalyzes the prenylation of para-hydroxybenzoate (PHB) with an all-trans polyprenyl group. Mediates the second step in the final reaction sequence of ubiquinone-8 (UQ-8) biosynthesis, which is the condensation of the polyisoprenoid side chain with PHB, generating the first membrane-bound Q intermediate 3-octaprenyl-4-hydroxybenzoate. In Cupriavidus pinatubonensis (strain JMP 134 / LMG 1197) (Cupriavidus necator (strain JMP 134)), this protein is 4-hydroxybenzoate octaprenyltransferase.